A 423-amino-acid chain; its full sequence is MTPAEEMARLGAQAKDAARAMTRATPEAKNQALLGLAQLLHQREPEILAANARDIEAARAAGQDAARLDRLTLTSAIMEEMRAACAHVANLPDPVGATESQWQRPNGLLVGKMRIPLGVIAMVYEARPNVTIDAAILCIKAGNAVILRGGSEAIHSNTALAQTLQEAMVQAGLPASAAQLVTVPGHEAVNALCKLDQYIDVIIPRGGERLVRAVTEAATMPVLKHFKGVCHAYIEPDADLERALDIVFNGKVQRPGVCNALECLLVHKDAASAFLPLVAEKLGAAGVEFRADTTALPLMNKAPQGRVVPQRAEDLGQEFHDLVLAVRVVDSMDEALDHIARYGSNHTEIICTNDYAKAMRFLREADASMVAVNASSRFNDGGQLGLGAEIGISTSKLHAYGAMGVEELTTTKFVVLGQGQVRQ.

Belongs to the gamma-glutamyl phosphate reductase family.

Its subcellular location is the cytoplasm. The enzyme catalyses L-glutamate 5-semialdehyde + phosphate + NADP(+) = L-glutamyl 5-phosphate + NADPH + H(+). It participates in amino-acid biosynthesis; L-proline biosynthesis; L-glutamate 5-semialdehyde from L-glutamate: step 2/2. Functionally, catalyzes the NADPH-dependent reduction of L-glutamate 5-phosphate into L-glutamate 5-semialdehyde and phosphate. The product spontaneously undergoes cyclization to form 1-pyrroline-5-carboxylate. This chain is Gamma-glutamyl phosphate reductase, found in Desulfovibrio desulfuricans (strain ATCC 27774 / DSM 6949 / MB).